A 121-amino-acid chain; its full sequence is Small ribosomal subunit protein uS13 (121 aa).

A disordered region spans residues 90-121 (RHRHGLPVRGQHTKNNARTRKGKAVAIAGKKK).

It belongs to the universal ribosomal protein uS13 family. Part of the 30S ribosomal subunit. Forms a loose heterodimer with protein S19. Forms two bridges to the 50S subunit in the 70S ribosome.

In terms of biological role, located at the top of the head of the 30S subunit, it contacts several helices of the 16S rRNA. In the 70S ribosome it contacts the 23S rRNA (bridge B1a) and protein L5 of the 50S subunit (bridge B1b), connecting the 2 subunits; these bridges are implicated in subunit movement. Contacts the tRNAs in the A and P-sites. This is Small ribosomal subunit protein uS13 from Limosilactobacillus fermentum (strain NBRC 3956 / LMG 18251) (Lactobacillus fermentum).